A 277-amino-acid polypeptide reads, in one-letter code: Large ribosomal subunit protein uL2 (277 aa).

Disordered regions lie at residues 35-60 and 225-277; these read EKQS…GHKQ and MNPV…ANKR. Residues 43–53 are compositionally biased toward polar residues; sequence RNNNGHITTRH.

This sequence belongs to the universal ribosomal protein uL2 family. As to quaternary structure, part of the 50S ribosomal subunit. Forms a bridge to the 30S subunit in the 70S ribosome.

Functionally, one of the primary rRNA binding proteins. Required for association of the 30S and 50S subunits to form the 70S ribosome, for tRNA binding and peptide bond formation. It has been suggested to have peptidyltransferase activity; this is somewhat controversial. Makes several contacts with the 16S rRNA in the 70S ribosome. The chain is Large ribosomal subunit protein uL2 from Methylobacillus flagellatus (strain ATCC 51484 / DSM 6875 / VKM B-1610 / KT).